The chain runs to 270 residues: NAD kinase (270 aa).

Asp63 functions as the Proton acceptor in the catalytic mechanism. NAD(+) is bound by residues 63–64 (DG), 131–132 (NE), Lys142, Arg159, Asp161, 172–177 (TAYAMS), Ala196, and Gln230.

This sequence belongs to the NAD kinase family. Requires a divalent metal cation as cofactor.

It localises to the cytoplasm. It carries out the reaction NAD(+) + ATP = ADP + NADP(+) + H(+). Its function is as follows. Involved in the regulation of the intracellular balance of NAD and NADP, and is a key enzyme in the biosynthesis of NADP. Catalyzes specifically the phosphorylation on 2'-hydroxyl of the adenosine moiety of NAD to yield NADP. The chain is NAD kinase from Methanoculleus marisnigri (strain ATCC 35101 / DSM 1498 / JR1).